A 474-amino-acid chain; its full sequence is Ribulose bisphosphate carboxylase large chain (474 aa).

Lys-13 is modified (N6,N6,N6-trimethyllysine). Substrate is bound by residues Asn-122 and Thr-172. The active-site Proton acceptor is the Lys-174. Lys-176 lines the substrate pocket. Lys-200, Asp-202, and Glu-203 together coordinate Mg(2+). Lys-200 is modified (N6-carboxylysine). His-293 (proton acceptor) is an active-site residue. Arg-294, His-326, and Ser-378 together coordinate substrate.

The protein belongs to the RuBisCO large chain family. Type I subfamily. As to quaternary structure, heterohexadecamer of 8 large chains and 8 small chains; disulfide-linked. The disulfide link is formed within the large subunit homodimers. It depends on Mg(2+) as a cofactor. The disulfide bond which can form in the large chain dimeric partners within the hexadecamer appears to be associated with oxidative stress and protein turnover.

It is found in the plastid. Its subcellular location is the chloroplast. The enzyme catalyses 2 (2R)-3-phosphoglycerate + 2 H(+) = D-ribulose 1,5-bisphosphate + CO2 + H2O. It catalyses the reaction D-ribulose 1,5-bisphosphate + O2 = 2-phosphoglycolate + (2R)-3-phosphoglycerate + 2 H(+). In terms of biological role, ruBisCO catalyzes two reactions: the carboxylation of D-ribulose 1,5-bisphosphate, the primary event in carbon dioxide fixation, as well as the oxidative fragmentation of the pentose substrate in the photorespiration process. Both reactions occur simultaneously and in competition at the same active site. The chain is Ribulose bisphosphate carboxylase large chain from Dendrophthora clavata (Columbian mistletoe).